The primary structure comprises 159 residues: SsrA-binding protein (159 aa).

The protein belongs to the SmpB family.

The protein localises to the cytoplasm. Functionally, required for rescue of stalled ribosomes mediated by trans-translation. Binds to transfer-messenger RNA (tmRNA), required for stable association of tmRNA with ribosomes. tmRNA and SmpB together mimic tRNA shape, replacing the anticodon stem-loop with SmpB. tmRNA is encoded by the ssrA gene; the 2 termini fold to resemble tRNA(Ala) and it encodes a 'tag peptide', a short internal open reading frame. During trans-translation Ala-aminoacylated tmRNA acts like a tRNA, entering the A-site of stalled ribosomes, displacing the stalled mRNA. The ribosome then switches to translate the ORF on the tmRNA; the nascent peptide is terminated with the 'tag peptide' encoded by the tmRNA and targeted for degradation. The ribosome is freed to recommence translation, which seems to be the essential function of trans-translation. The chain is SsrA-binding protein from Acidiphilium cryptum (strain JF-5).